Consider the following 616-residue polypeptide: Proline--tRNA ligase (616 aa).

The protein belongs to the class-II aminoacyl-tRNA synthetase family. ProS type 1 subfamily. Homodimer.

It is found in the cytoplasm. The enzyme catalyses tRNA(Pro) + L-proline + ATP = L-prolyl-tRNA(Pro) + AMP + diphosphate. In terms of biological role, catalyzes the attachment of proline to tRNA(Pro) in a two-step reaction: proline is first activated by ATP to form Pro-AMP and then transferred to the acceptor end of tRNA(Pro). As ProRS can inadvertently accommodate and process non-cognate amino acids such as alanine and cysteine, to avoid such errors it has two additional distinct editing activities against alanine. One activity is designated as 'pretransfer' editing and involves the tRNA(Pro)-independent hydrolysis of activated Ala-AMP. The other activity is designated 'posttransfer' editing and involves deacylation of mischarged Ala-tRNA(Pro). The misacylated Cys-tRNA(Pro) is not edited by ProRS. In Lactococcus lactis subsp. lactis (strain IL1403) (Streptococcus lactis), this protein is Proline--tRNA ligase.